A 29-amino-acid chain; its full sequence is Galanin (29 aa).

At Ala29 the chain carries Alanine amide.

This sequence belongs to the galanin family.

Its subcellular location is the secreted. Its function is as follows. Contracts smooth muscle of the gastrointestinal and genitourinary tract, regulates growth hormone release, modulates insulin release, and may be involved in the control of adrenal secretion. The sequence is that of Galanin (gal) from Amia calva (Bowfin).